The sequence spans 225 residues: MTNIQALFERIAPLYDRLNDQLSFGLHHVWKQMAVDWLELPQGATALDLCCGTGDLTRLLARRVGRQGRVVGLDFAAAPLAIARQRSDHYPQIEWLQGDALAVPFAPQTFQGITIGYGLRNVVDIPQALREMFRLLVPGGRAAILDFSHPQTSALEQFQQWYLQQWVVPTARHYGLAAEYDYLWPSIQAFPTPPTLCALIQQAGFERVKHYPLLGGLMAITVAQK.

This sequence belongs to the class I-like SAM-binding methyltransferase superfamily. MenG/UbiE family.

It catalyses the reaction demethylphylloquinol + S-adenosyl-L-methionine = phylloquinol + S-adenosyl-L-homocysteine + H(+). The protein operates within cofactor biosynthesis; phylloquinone biosynthesis. Functionally, methyltransferase required for the conversion of 2-phytyl-1,4-beta-naphthoquinol to phylloquinol. This is 2-phytyl-1,4-naphtoquinone methyltransferase from Thermosynechococcus vestitus (strain NIES-2133 / IAM M-273 / BP-1).